The primary structure comprises 985 residues: Guanine nucleotide exchange protein smcr8b (985 aa).

A uDENN FLCN/SMCR8-type domain is found at 47–225 (ISSAKLKKDF…VKCSSEREPI (179 aa)). Positions 242–292 (NEKSSHTDEISPQEKDGCGNSRKVEVKLENENRSHFEHEQYGKQRKDKPDK) are enriched in basic and acidic residues. Disordered stretches follow at residues 242 to 301 (NEKS…PLAN), 502 to 528 (QSQV…SPAE), and 639 to 659 (EESP…EDNN). The cDENN FLCN/SMCR8-type domain occupies 390–895 (RLKTLEELCD…LINLLVEPKS (506 aa)). Polar residues predominate over residues 502–514 (QSQVQHSTLNTPS). The region spanning 904–962 (FTFAQSVQSKLVTKAFLLTFSHGHPSPSRPQGSSGTECFLSELHTDDKKILRYLSELIK) is the dDENN FLCN/SMCR8-type domain.

Belongs to the SMCR8 family. Component of the C9orf72-SMCR8 complex. The C9orf72-SMCR8 complex associates with the ATG1/ULK1 kinase complex.

It localises to the cytoplasm. The protein localises to the nucleus. In terms of biological role, component of the C9orf72-SMCR8 complex, a complex that has guanine nucleotide exchange factor (GEF) activity and regulates autophagy. In the complex, C9orf72 and SMCR8 probably constitute the catalytic subunits that promote the exchange of GDP to GTP, converting inactive GDP-bound RAB8A and RAB39B into their active GTP-bound form, thereby promoting autophagosome maturation. The C9orf72-SMCR8 complex also acts as a negative regulator of autophagy initiation by interacting with the ATG1/ULK1 kinase complex and inhibiting its protein kinase activity. This chain is Guanine nucleotide exchange protein smcr8b (smcr8b), found in Danio rerio (Zebrafish).